Consider the following 156-residue polypeptide: Small ribosomal subunit protein uS7 (156 aa).

It belongs to the universal ribosomal protein uS7 family. In terms of assembly, part of the 30S ribosomal subunit. Contacts proteins S9 and S11.

One of the primary rRNA binding proteins, it binds directly to 16S rRNA where it nucleates assembly of the head domain of the 30S subunit. Is located at the subunit interface close to the decoding center, probably blocks exit of the E-site tRNA. This chain is Small ribosomal subunit protein uS7, found in Streptococcus pneumoniae serotype 4 (strain ATCC BAA-334 / TIGR4).